A 218-amino-acid polypeptide reads, in one-letter code: 3,4-dihydroxy-2-butanone 4-phosphate synthase (218 aa).

D-ribulose 5-phosphate is bound by residues 38-39 (RE), Asp43, 151-155 (RRGHT), and Glu175. Residue Glu39 participates in Mg(2+) binding. His154 lines the Mg(2+) pocket.

This sequence belongs to the DHBP synthase family. As to quaternary structure, homodimer. Mg(2+) is required as a cofactor. The cofactor is Mn(2+).

It catalyses the reaction D-ribulose 5-phosphate = (2S)-2-hydroxy-3-oxobutyl phosphate + formate + H(+). It participates in cofactor biosynthesis; riboflavin biosynthesis; 2-hydroxy-3-oxobutyl phosphate from D-ribulose 5-phosphate: step 1/1. Functionally, catalyzes the conversion of D-ribulose 5-phosphate to formate and 3,4-dihydroxy-2-butanone 4-phosphate. This chain is 3,4-dihydroxy-2-butanone 4-phosphate synthase, found in Shewanella frigidimarina (strain NCIMB 400).